A 224-amino-acid chain; its full sequence is Small ribosomal subunit protein uS13 (224 aa).

Residues 1-17 (MSEKTDKTEKKQKKAEE) show a composition bias toward basic and acidic residues. 2 disordered regions span residues 1–64 (MSEK…AEEK) and 184–224 (HERG…EDKK). Composition is skewed to low complexity over residues 20-30 (ETASAEAAPAK) and 38-47 (AKPAEGAPAD). The segment covering 210 to 224 (KKGEQGGAAKKEDKK) has biased composition (basic and acidic residues).

The protein belongs to the universal ribosomal protein uS13 family. As to quaternary structure, part of the 30S ribosomal subunit. Forms a loose heterodimer with protein S19. Forms two bridges to the 50S subunit in the 70S ribosome.

Its function is as follows. Located at the top of the head of the 30S subunit, it contacts several helices of the 16S rRNA. In the 70S ribosome it contacts the 23S rRNA (bridge B1a) and protein L5 of the 50S subunit (bridge B1b), connecting the 2 subunits; these bridges are implicated in subunit movement. The sequence is that of Small ribosomal subunit protein uS13 from Methanocella arvoryzae (strain DSM 22066 / NBRC 105507 / MRE50).